We begin with the raw amino-acid sequence, 72 residues long: DNA gyrase inhibitor YacG (72 aa).

4 residues coordinate Zn(2+): Cys17, Cys20, Cys32, and Cys36. The segment at 51–72 (IPGPEEEEMSYPPRSDDENRSR) is disordered.

It belongs to the DNA gyrase inhibitor YacG family. Interacts with GyrB. Requires Zn(2+) as cofactor.

Functionally, inhibits all the catalytic activities of DNA gyrase by preventing its interaction with DNA. Acts by binding directly to the C-terminal domain of GyrB, which probably disrupts DNA binding by the gyrase. The polypeptide is DNA gyrase inhibitor YacG (Methylorubrum extorquens (strain PA1) (Methylobacterium extorquens)).